Consider the following 272-residue polypeptide: U11/U12 small nuclear ribonucleoprotein 35 kDa protein (272 aa).

The RRM domain occupies 51–129; that stretch reads LTLFVSRLSP…REVFVDFELE (79 aa). Composition is skewed to basic and acidic residues over residues 146 to 162 and 190 to 272; these read GKKE…DRPF and RDRS…EHNR. The segment at 146–272 is disordered; the sequence is GKKESGQLRF…RKHRSDEHNR (127 aa). Residues 221 to 258 are a coiled coil; the sequence is TKDDKEQNAEHTKRERSREQAKNDKDKEKKDSKRERSR.

It localises to the nucleus. This is U11/U12 small nuclear ribonucleoprotein 35 kDa protein (snrnp35) from Xenopus laevis (African clawed frog).